The chain runs to 161 residues: MPSFDVVSEANMIEVKNAIEQSNKEISTRFDFKGSDARVEQKERELTLFADDDFKLGQVKDVLINKLAKRNVDVRFLDYGKVEKIGGDKVKQIVTVKKGVTGDLAKKIVRLVKDSKIKVQASIQGDAVRVTGTKRDDLQSVIAMLRKEVTDTPLDFNNFRD.

This sequence belongs to the YajQ family.

Functionally, nucleotide-binding protein. The chain is Nucleotide-binding protein Bamb_2603 from Burkholderia ambifaria (strain ATCC BAA-244 / DSM 16087 / CCUG 44356 / LMG 19182 / AMMD) (Burkholderia cepacia (strain AMMD)).